The primary structure comprises 556 residues: 2-succinyl-5-enolpyruvyl-6-hydroxy-3-cyclohexene-1-carboxylate synthase (556 aa).

It belongs to the TPP enzyme family. MenD subfamily. In terms of assembly, homodimer. The cofactor is Mg(2+). It depends on Mn(2+) as a cofactor. Thiamine diphosphate serves as cofactor.

It carries out the reaction isochorismate + 2-oxoglutarate + H(+) = 5-enolpyruvoyl-6-hydroxy-2-succinyl-cyclohex-3-ene-1-carboxylate + CO2. It functions in the pathway quinol/quinone metabolism; 1,4-dihydroxy-2-naphthoate biosynthesis; 1,4-dihydroxy-2-naphthoate from chorismate: step 2/7. The protein operates within quinol/quinone metabolism; menaquinone biosynthesis. Functionally, catalyzes the thiamine diphosphate-dependent decarboxylation of 2-oxoglutarate and the subsequent addition of the resulting succinic semialdehyde-thiamine pyrophosphate anion to isochorismate to yield 2-succinyl-5-enolpyruvyl-6-hydroxy-3-cyclohexene-1-carboxylate (SEPHCHC). The protein is 2-succinyl-5-enolpyruvyl-6-hydroxy-3-cyclohexene-1-carboxylate synthase of Salmonella agona (strain SL483).